Here is a 724-residue protein sequence, read N- to C-terminus: Phosphoribosylformylglycinamidine synthase subunit PurL (724 aa).

The active site involves His-34. Position 37 (Tyr-37) interacts with ATP. Glu-78 serves as a coordination point for Mg(2+). Substrate contacts are provided by residues 79–82 and Arg-101; that span reads SHNH. His-80 acts as the Proton acceptor in catalysis. Asp-102 is a Mg(2+) binding site. Gln-226 is a substrate binding site. Asp-254 contributes to the Mg(2+) binding site. Residue 298–300 coordinates substrate; it reads ESQ. 2 residues coordinate ATP: Asp-480 and Gly-517. Position 518 (Asn-518) interacts with Mg(2+). Ser-520 contributes to the substrate binding site.

It belongs to the FGAMS family. Monomer. Part of the FGAM synthase complex composed of 1 PurL, 1 PurQ and 2 PurS subunits.

The protein resides in the cytoplasm. It carries out the reaction N(2)-formyl-N(1)-(5-phospho-beta-D-ribosyl)glycinamide + L-glutamine + ATP + H2O = 2-formamido-N(1)-(5-O-phospho-beta-D-ribosyl)acetamidine + L-glutamate + ADP + phosphate + H(+). The protein operates within purine metabolism; IMP biosynthesis via de novo pathway; 5-amino-1-(5-phospho-D-ribosyl)imidazole from N(2)-formyl-N(1)-(5-phospho-D-ribosyl)glycinamide: step 1/2. Its function is as follows. Part of the phosphoribosylformylglycinamidine synthase complex involved in the purines biosynthetic pathway. Catalyzes the ATP-dependent conversion of formylglycinamide ribonucleotide (FGAR) and glutamine to yield formylglycinamidine ribonucleotide (FGAM) and glutamate. The FGAM synthase complex is composed of three subunits. PurQ produces an ammonia molecule by converting glutamine to glutamate. PurL transfers the ammonia molecule to FGAR to form FGAM in an ATP-dependent manner. PurS interacts with PurQ and PurL and is thought to assist in the transfer of the ammonia molecule from PurQ to PurL. In Methanopyrus kandleri (strain AV19 / DSM 6324 / JCM 9639 / NBRC 100938), this protein is Phosphoribosylformylglycinamidine synthase subunit PurL.